We begin with the raw amino-acid sequence, 444 residues long: UDP-N-acetylmuramate--L-alanine ligase (444 aa).

110-116 (GAHGKTS) provides a ligand contact to ATP.

Belongs to the MurCDEF family.

The protein localises to the cytoplasm. It carries out the reaction UDP-N-acetyl-alpha-D-muramate + L-alanine + ATP = UDP-N-acetyl-alpha-D-muramoyl-L-alanine + ADP + phosphate + H(+). Its pathway is cell wall biogenesis; peptidoglycan biosynthesis. Functionally, cell wall formation. This Streptococcus pneumoniae (strain CGSP14) protein is UDP-N-acetylmuramate--L-alanine ligase.